A 999-amino-acid chain; its full sequence is Hypoxia up-regulated protein 1 (999 aa).

Residues 1–32 (MAATVRRQRPRRLLCWTLVAVLLADLLALSDT) form the signal peptide. N155, N222, and N515 each carry an N-linked (GlcNAc...) asparagine glycan. A disordered region spans residues 564 to 694 (VEDSPEEEST…KKQKPARKQK (131 aa)). At S567 the chain carries Phosphoserine. Polar residues predominate over residues 574–583 (LTKLGNTISS). N-linked (GlcNAc...) asparagine glycosylation is present at N596. Basic and acidic residues-rich tracts occupy residues 611–626 (GSKD…KEET) and 641–670 (PKGD…EEKG). 3 N-linked (GlcNAc...) asparagine glycosylation sites follow: N830, N862, and N869. K883 carries the post-translational modification N6-acetyllysine. The disordered stretch occupies residues 909–999 (AKFTKPRPRP…QKRSSKNDEL (91 aa)). N-linked (GlcNAc...) asparagine glycans are attached at residues N922 and N931. Residues 949 to 962 (EEAKPILEPDKEET) are compositionally biased toward basic and acidic residues. The Prevents secretion from ER signature appears at 996 to 999 (NDEL).

This sequence belongs to the heat shock protein 70 family. In terms of assembly, part of a large chaperone multiprotein complex comprising DNAJB11, HSP90B1, HSPA5, HYOU, PDIA2, PDIA4, PDIA6, PPIB, SDF2L1, UGGT1 and very small amounts of ERP29, but not, or at very low levels, CALR nor CANX.

The protein localises to the endoplasmic reticulum lumen. Its function is as follows. Has a pivotal role in cytoprotective cellular mechanisms triggered by oxygen deprivation. Promotes HSPA5/BiP-mediated ATP nucleotide exchange and thereby activates the unfolded protein response (UPR) pathway in the presence of endoplasmic reticulum stress. May play a role as a molecular chaperone and participate in protein folding. The chain is Hypoxia up-regulated protein 1 (HYOU1) from Cricetulus griseus (Chinese hamster).